The sequence spans 194 residues: Ribosome maturation factor RimP (194 aa).

This sequence belongs to the RimP family.

Its subcellular location is the cytoplasm. In terms of biological role, required for maturation of 30S ribosomal subunits. In Jannaschia sp. (strain CCS1), this protein is Ribosome maturation factor RimP.